The sequence spans 246 residues: DNA polymerase sliding clamp (246 aa).

This sequence belongs to the PCNA family. In terms of assembly, homotrimer. The subunits circularize to form a toroid; DNA passes through its center. Replication factor C (RFC) is required to load the toroid on the DNA.

Its function is as follows. Sliding clamp subunit that acts as a moving platform for DNA processing. Responsible for tethering the catalytic subunit of DNA polymerase and other proteins to DNA during high-speed replication. This Methanocella arvoryzae (strain DSM 22066 / NBRC 105507 / MRE50) protein is DNA polymerase sliding clamp.